A 568-amino-acid chain; its full sequence is Zinc finger protein 768 (568 aa).

Basic and acidic residues predominate over residues 1–16 (MEREASSWGLESRDVH). Disordered regions lie at residues 1-223 (MERE…SLGV), 228-247 (SFTQGFGEQPTGALPPFDMP), and 264-287 (LNLTGTLRGPGRRGGRARGGQGPR). Residues serine 17, serine 23, and serine 27 each carry the phosphoserine modification. A Phosphothreonine modification is found at threonine 35. Serine 36, serine 65, serine 72, serine 79, serine 86, serine 93, serine 100, serine 107, serine 114, serine 121, serine 128, serine 135, and serine 149 each carry phosphoserine. Low complexity predominate over residues 62 to 80 (EPQSPEFEPQSPEFESQSP). A compositionally biased stretch (polar residues) spans 110-122 (SDPQSPEFESQSP). A Phosphotyrosine modification is found at tyrosine 152. A Phosphoserine modification is found at serine 154. Polar residues predominate over residues 159-186 (FESQSPGYESQSPGYEPQNSGDGVQNSE). At threonine 189 the chain carries Phosphothreonine. Serine 191 is subject to Phosphoserine. The C2H2-type 1 zinc finger occupies 289-311 (NICGICGKSFGRGSTLIQHQRIH). Threonine 312 bears the Phosphothreonine mark. Residue tyrosine 317 is modified to Phosphotyrosine. 4 C2H2-type zinc fingers span residues 317-339 (YKCEVCSKAFSQSSDLIKHQRTH), 345-367 (YKCPRCGKAFADSSYLLRHQRTH), 373-395 (YKCPHCGKAFGDSSYLLRHQRTH), and 401-423 (YSCPECGKCYSQNSSLRSHQRVH). A phosphoserine mark is found at serine 323 and serine 327. Phosphothreonine is present on threonine 424. 5 C2H2-type zinc fingers span residues 429–451 (FSCGICGKSFSQRSALIPHARSH), 457–479 (FKCPECGKRFGQSSVLAIHARTH), 485–507 (YSCPDCGKTFNRSSTLIQHQRSH), 513–535 (YRCAVCGKGFCRSSTLLQHHRVH), and 541–563 (YKCDDCGKAFSQSSDLIRHQRTH). Serine 470 carries the post-translational modification Phosphoserine.

The protein belongs to the krueppel C2H2-type zinc-finger protein family. Interacts (via zinc-finger domains) with TP53 (via N-terminus); interaction might be facilitated by TP53 oligomerization state. Interacts with ELP3. In terms of processing, may be phosphorylated at residue 'Ser-5' of the tandem heptapeptide repeats in the N-terminus. Phosphorylation might be increased upon RAS pathway activation and negatively regulate protein stability.

The protein resides in the nucleus. It localises to the chromosome. Functionally, binds to mammalian-wide interspersed repeat (MIRs) sequences in euchromatin and promoter regions of genes at the consensus sequence 5'-GCTGTGTG-[N20]-CCTCTCTG-3', consisting of two anchor regions connected by a linker region; the linker region probably does not contribute to the binding specificity. Required for cell homeostasis. May be involved in transcriptional regulation. The polypeptide is Zinc finger protein 768 (Znf768) (Mus musculus (Mouse)).